The chain runs to 149 residues: Large ribosomal subunit protein bL9 (149 aa).

This sequence belongs to the bacterial ribosomal protein bL9 family.

In terms of biological role, binds to the 23S rRNA. This chain is Large ribosomal subunit protein bL9, found in Proteus mirabilis (strain HI4320).